A 127-amino-acid polypeptide reads, in one-letter code: UPF0102 protein Paes_0016 (127 aa).

It belongs to the UPF0102 family.

The polypeptide is UPF0102 protein Paes_0016 (Prosthecochloris aestuarii (strain DSM 271 / SK 413)).